Here is a 522-residue protein sequence, read N- to C-terminus: Target of rapamycin complex 2 subunit MAPKAP1 (522 aa).

Residues 2–184 (GFLDNPTIIL…KKIDVYLPLH (183 aa)) are interaction with MAP3K2. The interaction with NBN stretch occupies residues 2–267 (GFLDNPTIIL…GFSTLALVEK (266 aa)). A Phosphothreonine modification is found at threonine 86. 4 positions are modified to phosphoserine: serine 128, serine 186, serine 315, and serine 356. One can recognise a CRIM domain in the interval 139–267 (QSILSVRLEQ…GFSTLALVEK (129 aa)). Positions 279 to 353 (LFVRINAAHG…QSAWEFCLVR (75 aa)) are SIN1-type RBD. The SIN1-type PH domain occupies 382–487 (HYKSFKVSMI…IVLKVNYILE (106 aa)). Arginine 393 provides a ligand contact to a 1,2-diacyl-sn-glycero-3-phospho-(1D-myo-inositol-3,4,5-trisphosphate). Threonine 398 bears the Phosphothreonine mark. A 1,2-diacyl-sn-glycero-3-phospho-(1D-myo-inositol-3,4,5-trisphosphate) is bound by residues lysine 428 and lysine 464. Residues 468–522 (FESDAATVNEIVLKVNYILESRASTARADYFAQKQRKLNRRTSFSFQKEKKSGQQ) form an interaction with ATF2 region. Serine 510 bears the Phosphoserine mark.

Belongs to the SIN1 family. In terms of assembly, component of the mechanistic target of rapamycin complex 2 (mTORC2), consisting in two heterotretramers composed of MTOR, MLST8, RICTOR and MAPKAP1/SIN1. The mTORC2 core complex associates with PRR5/PROTOR1 and/or PRR5L/PROTOR2. Contrary to mTORC1, mTORC2 does not bind to and is not sensitive to FKBP12-rapamycin. Interacts with MAP3K2. Interacts with ATF2. Interacts with MAPK8. Interacts with GTP-bound HRAS and KRAS; inhibiting their activity. Interacts with IFNAR2. Post-translationally, phosphorylation at Ser-128 by PKC promotes relocalization to the perinuclear region, where the mTORC2 complex specifically mediates phosphorylation of SGK1. Phosphorylated at Thr-86 by AKT1 or RPS6KB1 in the presence of growth factors; the effect of this phosphorylation is however unclear. According to two studies, phosphorylation at Thr-86 by AKT1 is part of a positive feedback loop that increases mTORC2 activation. According to another study, phosphorylation at Thr-86 and Thr-398 by RPS6KB1 promotes dissociation from the mTORC2 complex, leading to inhibit mTORC2 signaling. As to expression, present in the lumenal epithelium and glandular epithelium of endometrium (at protein level).

The protein localises to the cell membrane. The protein resides in the cytoplasmic vesicle. It is found in the endoplasmic reticulum membrane. It localises to the early endosome membrane. Its subcellular location is the late endosome membrane. The protein localises to the lysosome membrane. The protein resides in the golgi apparatus membrane. It is found in the mitochondrion outer membrane. It localises to the cytoplasm. Its subcellular location is the perinuclear region. The protein localises to the nucleus. Its activity is regulated as follows. Phosphatidylinositol 3,4,5-trisphosphate (PI(3,4,5)P3) promotes MTOR activation by relieving MAPKAP1/SIN1-mediated inhibition of MTOR that takes place in absence of PI(3,4,5)P3. Functionally, component of the mechanistic target of rapamycin complex 2 (mTORC2), which transduces signals from growth factors to pathways involved in proliferation, cytoskeletal organization, lipogenesis and anabolic output. In response to growth factors, mTORC2 phosphorylates and activates AGC protein kinase family members, including AKT (AKT1, AKT2 and AKT3), PKC (PRKCA, PRKCB and PRKCE) and SGK1. In contrast to mTORC1, mTORC2 is nutrient-insensitive. Within the mTORC2 complex, MAPKAP1/SIN1 acts as a substrate adapter which recognizes and binds AGC protein kinase family members for phosphorylation by MTOR. mTORC2 plays a critical role in AKT1 activation by mediating phosphorylation of different sites depending on the context, such as 'Thr-450', 'Ser-473', 'Ser-477' or 'Thr-479', facilitating the phosphorylation of the activation loop of AKT1 on 'Thr-308' by PDPK1/PDK1 which is a prerequisite for full activation. mTORC2 catalyzes the phosphorylation of SGK1 at 'Ser-422' and of PRKCA on 'Ser-657'. The mTORC2 complex also phosphorylates various proteins involved in insulin signaling, such as FBXW8 and IGF2BP1. mTORC2 acts upstream of Rho GTPases to regulate the actin cytoskeleton, probably by activating one or more Rho-type guanine nucleotide exchange factors. mTORC2 promotes the serum-induced formation of stress-fibers or F-actin. MAPKAP1 inhibits MAP3K2 by preventing its dimerization and autophosphorylation. Inhibits HRAS and KRAS independently of mTORC2 complex. Enhances osmotic stress-induced phosphorylation of ATF2 and ATF2-mediated transcription. Involved in ciliogenesis, regulates cilia length through its interaction with CCDC28B independently of mTORC2 complex. This is Target of rapamycin complex 2 subunit MAPKAP1 (MAPKAP1) from Ovis aries (Sheep).